Consider the following 625-residue polypeptide: 1-deoxy-D-xylulose-5-phosphate synthase (625 aa).

Thiamine diphosphate contacts are provided by residues His-80 and 121–123 (GHS). Position 152 (Asp-152) interacts with Mg(2+). Residues 153 to 154 (GS), Asn-181, Tyr-290, and Glu-371 each bind thiamine diphosphate. Asn-181 contributes to the Mg(2+) binding site.

It belongs to the transketolase family. DXPS subfamily. In terms of assembly, homodimer. Mg(2+) serves as cofactor. Thiamine diphosphate is required as a cofactor.

It catalyses the reaction D-glyceraldehyde 3-phosphate + pyruvate + H(+) = 1-deoxy-D-xylulose 5-phosphate + CO2. It participates in metabolic intermediate biosynthesis; 1-deoxy-D-xylulose 5-phosphate biosynthesis; 1-deoxy-D-xylulose 5-phosphate from D-glyceraldehyde 3-phosphate and pyruvate: step 1/1. Catalyzes the acyloin condensation reaction between C atoms 2 and 3 of pyruvate and glyceraldehyde 3-phosphate to yield 1-deoxy-D-xylulose-5-phosphate (DXP). The protein is 1-deoxy-D-xylulose-5-phosphate synthase of Haemophilus influenzae (strain PittGG).